The following is a 280-amino-acid chain: UDP-3-O-acyl-N-acetylglucosamine deacetylase (280 aa).

Positions 79, 237, and 241 each coordinate Zn(2+). Catalysis depends on H264, which acts as the Proton donor.

The protein belongs to the LpxC family. Requires Zn(2+) as cofactor.

It catalyses the reaction a UDP-3-O-[(3R)-3-hydroxyacyl]-N-acetyl-alpha-D-glucosamine + H2O = a UDP-3-O-[(3R)-3-hydroxyacyl]-alpha-D-glucosamine + acetate. Its pathway is glycolipid biosynthesis; lipid IV(A) biosynthesis; lipid IV(A) from (3R)-3-hydroxytetradecanoyl-[acyl-carrier-protein] and UDP-N-acetyl-alpha-D-glucosamine: step 2/6. Functionally, catalyzes the hydrolysis of UDP-3-O-myristoyl-N-acetylglucosamine to form UDP-3-O-myristoylglucosamine and acetate, the committed step in lipid A biosynthesis. The chain is UDP-3-O-acyl-N-acetylglucosamine deacetylase from Chlamydia abortus (strain DSM 27085 / S26/3) (Chlamydophila abortus).